The sequence spans 785 residues: Endonuclease MutS2 (785 aa).

Residue 331–338 participates in ATP binding; the sequence is GPNTGGKT. Positions 710–785 constitute a Smr domain; sequence LDLRGLYADE…GLGVTVVELA (76 aa).

It belongs to the DNA mismatch repair MutS family. MutS2 subfamily. Homodimer. Binds to stalled ribosomes, contacting rRNA.

Functionally, endonuclease that is involved in the suppression of homologous recombination and thus may have a key role in the control of bacterial genetic diversity. In terms of biological role, acts as a ribosome collision sensor, splitting the ribosome into its 2 subunits. Detects stalled/collided 70S ribosomes which it binds and splits by an ATP-hydrolysis driven conformational change. Acts upstream of the ribosome quality control system (RQC), a ribosome-associated complex that mediates the extraction of incompletely synthesized nascent chains from stalled ribosomes and their subsequent degradation. Probably generates substrates for RQC. The chain is Endonuclease MutS2 from Pelotomaculum thermopropionicum (strain DSM 13744 / JCM 10971 / SI).